Here is a 126-residue protein sequence, read N- to C-terminus: Holo-[acyl-carrier-protein] synthase (126 aa).

Positions 9 and 58 each coordinate Mg(2+).

It belongs to the P-Pant transferase superfamily. AcpS family. Mg(2+) is required as a cofactor.

Its subcellular location is the cytoplasm. The catalysed reaction is apo-[ACP] + CoA = holo-[ACP] + adenosine 3',5'-bisphosphate + H(+). In terms of biological role, transfers the 4'-phosphopantetheine moiety from coenzyme A to a Ser of acyl-carrier-protein. The protein is Holo-[acyl-carrier-protein] synthase of Escherichia coli O17:K52:H18 (strain UMN026 / ExPEC).